Reading from the N-terminus, the 140-residue chain is L-fucose mutarotase (140 aa).

His-22 serves as the catalytic Proton donor. Substrate-binding positions include Asp-30, Arg-107, and Tyr-129–Asn-131.

It belongs to the RbsD / FucU family. FucU mutarotase subfamily. Homodecamer.

Its subcellular location is the cytoplasm. It catalyses the reaction alpha-L-fucose = beta-L-fucose. The protein operates within carbohydrate metabolism; L-fucose metabolism. Functionally, involved in the anomeric conversion of L-fucose. The polypeptide is L-fucose mutarotase (Salmonella gallinarum (strain 287/91 / NCTC 13346)).